Reading from the N-terminus, the 450-residue chain is Divalent metal cation transporter MntH (450 aa).

11 helical membrane passes run 44–64, 77–97, 121–141, 152–172, 181–201, 218–238, 273–293, 310–330, 366–386, 387–407, and 419–439; these read LLAF…PGNW, TLLS…SLAA, FLLW…EVIG, IPLI…LLLM, AFVI…IVAA, IFTN…TVMP, IALM…AATF, LLSP…ALLA, GIAI…GTAD, LLVF…IPLV, and FAIS…IVVL.

This sequence belongs to the NRAMP family.

It is found in the cell inner membrane. H(+)-stimulated, divalent metal cation uptake system. This Bradyrhizobium diazoefficiens (strain JCM 10833 / BCRC 13528 / IAM 13628 / NBRC 14792 / USDA 110) protein is Divalent metal cation transporter MntH.